The following is a 343-amino-acid chain: Putative KilA-N domain-containing protein R904 (343 aa).

One can recognise a KilA-N domain in the interval 51–157; the sequence is EFSWGNYLNL…IKASVIINDY (107 aa). Residues 159–279 are a coiled coil; sequence AKQMFKEHEK…NAVKEYKELY (121 aa).

This chain is Putative KilA-N domain-containing protein R904, found in Acanthamoeba polyphaga mimivirus (APMV).